Here is a 443-residue protein sequence, read N- to C-terminus: Tubulin beta chain (443 aa).

GTP-binding residues include glutamine 11, glutamate 69, serine 138, glycine 142, threonine 143, glycine 144, asparagine 204, and asparagine 226. Residue glutamate 69 coordinates Mg(2+). The disordered stretch occupies residues 421 to 443; that stretch reads EYQQYQDASAEEEGEFGEEEEEN. Positions 429-443 are enriched in acidic residues; that stretch reads SAEEEGEFGEEEEEN.

This sequence belongs to the tubulin family. In terms of assembly, dimer of alpha and beta chains. A typical microtubule is a hollow water-filled tube with an outer diameter of 25 nm and an inner diameter of 15 nM. Alpha-beta heterodimers associate head-to-tail to form protofilaments running lengthwise along the microtubule wall with the beta-tubulin subunit facing the microtubule plus end conferring a structural polarity. Microtubules usually have 13 protofilaments but different protofilament numbers can be found in some organisms and specialized cells. Requires Mg(2+) as cofactor.

The protein localises to the cytoplasm. Its subcellular location is the cytoskeleton. Its function is as follows. Tubulin is the major constituent of microtubules, a cylinder consisting of laterally associated linear protofilaments composed of alpha- and beta-tubulin heterodimers. Microtubules grow by the addition of GTP-tubulin dimers to the microtubule end, where a stabilizing cap forms. Below the cap, tubulin dimers are in GDP-bound state, owing to GTPase activity of alpha-tubulin. The chain is Tubulin beta chain (TUBB1) from Polytomella agilis (Quadriflagellate alga).